The following is a 546-amino-acid chain: Membrane protein insertase YidC (546 aa).

Residues 8 to 28 traverse the membrane as a helical segment; that stretch reads ILLATVLSVGILILWQVIFPT. Residues 31–70 are disordered; that stretch reads VPPKPAPPPAAEVAKPAAPASPAPGAAAPAVPAPPPDAPE. Low complexity predominate over residues 41-60; it reads AEVAKPAAPASPAPGAAAPA. The next 5 membrane-spanning stretches (helical) occupy residues 326–346, 356–376, 422–442, 459–479, and 498–518; these read IDYGAVAKFFALFARGLLYVM, WGVAIILLTVLVRLVLFPLTY, LGGCLPMLLQMPVWFALYAAL, LTAHDPYFILPIAMGISSFVM, and FFPGFFTVIMLFVPGGLTLYI.

It belongs to the OXA1/ALB3/YidC family. Type 1 subfamily. Interacts with the Sec translocase complex via SecD. Specifically interacts with transmembrane segments of nascent integral membrane proteins during membrane integration.

Its subcellular location is the cell inner membrane. In terms of biological role, required for the insertion and/or proper folding and/or complex formation of integral membrane proteins into the membrane. Involved in integration of membrane proteins that insert both dependently and independently of the Sec translocase complex, as well as at least some lipoproteins. Aids folding of multispanning membrane proteins. This chain is Membrane protein insertase YidC, found in Anaeromyxobacter sp. (strain K).